Here is a 239-residue protein sequence, read N- to C-terminus: Small ribosomal subunit protein uS3 (239 aa).

A KH type-2 domain is found at 39 to 107 (VREFLRKKLA…ATSINIEEIR (69 aa)). The interval 215 to 239 (TSNTNELSDEKRNRRKPRNANRRKE) is disordered. Residues 227 to 239 (NRRKPRNANRRKE) show a composition bias toward basic residues.

This sequence belongs to the universal ribosomal protein uS3 family. As to quaternary structure, part of the 30S ribosomal subunit. Forms a tight complex with proteins S10 and S14.

In terms of biological role, binds the lower part of the 30S subunit head. Binds mRNA in the 70S ribosome, positioning it for translation. The sequence is that of Small ribosomal subunit protein uS3 from Dichelobacter nodosus (strain VCS1703A).